The following is a 273-amino-acid chain: Tyrosinase (273 aa).

Positions 1–18 (MCLLALGFLLGILQPASG) are cleaved as a signal peptide. 2 N-linked (GlcNAc...) asparagine glycosylation sites follow: Asn86 and Asn169. Cu cation contacts are provided by His180, His202, and His211. The N-linked (GlcNAc...) asparagine glycan is linked to Asn230.

Belongs to the tyrosinase family. Cu(2+) serves as cofactor.

It is found in the melanosome membrane. The enzyme catalyses 2 L-dopa + O2 = 2 L-dopaquinone + 2 H2O. The catalysed reaction is L-tyrosine + O2 = L-dopaquinone + H2O. In terms of biological role, this is a copper-containing oxidase that functions in the formation of pigments such as melanins and other polyphenolic compounds. This chain is Tyrosinase (TYR), found in Pelodiscus sinensis (Chinese softshell turtle).